A 444-amino-acid chain; its full sequence is Aflatoxin biosynthesis regulatory protein (444 aa).

Residues 1-26 form a disordered region; the sequence is MVDHISPRASPGPIRSSQTRRARKLR. Positions 29–56 form a DNA-binding region, zn(2)-C6 fungal-type; the sequence is CTSCASSKVRCTKEKPACARCIERGLAC. Residues 64 to 167 form a disordered region; sequence MGRNPRAPSP…QGLGGDLAGQ (104 aa). Over residues 106-116 the composition is skewed to basic residues; it reads TQAHTHAHSHP. Residues 120-130 show a composition bias toward low complexity; it reads PQSHPQSNQPP. Positions 136–149 are enriched in polar residues; that stretch reads PNGSSSVSAIFSHQ.

The protein resides in the nucleus. It participates in mycotoxin biosynthesis; aflatoxin biosynthesis. Functionally, involved in the regulation of aflatoxin biosynthesis. May have a role in nitrate assimilation and sclerotial morphogenesis. This is Aflatoxin biosynthesis regulatory protein (aflR) from Aspergillus parasiticus.